A 273-amino-acid polypeptide reads, in one-letter code: Putative phosphoenolpyruvate synthase regulatory protein (273 aa).

ADP is bound at residue 153–160 (AVSRAGKT).

This sequence belongs to the pyruvate, phosphate/water dikinase regulatory protein family. PSRP subfamily.

The enzyme catalyses [pyruvate, water dikinase] + ADP = [pyruvate, water dikinase]-phosphate + AMP + H(+). It catalyses the reaction [pyruvate, water dikinase]-phosphate + phosphate + H(+) = [pyruvate, water dikinase] + diphosphate. Its function is as follows. Bifunctional serine/threonine kinase and phosphorylase involved in the regulation of the phosphoenolpyruvate synthase (PEPS) by catalyzing its phosphorylation/dephosphorylation. The sequence is that of Putative phosphoenolpyruvate synthase regulatory protein from Xylella fastidiosa (strain M12).